Consider the following 378-residue polypeptide: Phospho-N-acetylmuramoyl-pentapeptide-transferase (378 aa).

11 helical membrane passes run 26 to 46 (LFRL…TGAN), 57 to 77 (LPWL…VPLL), 103 to 123 (MGGI…TGFA), 127 to 147 (LSPT…IGWW), 171 to 191 (GIGA…ATVV), 195 to 215 (WGWV…VPMA), 225 to 245 (GLDG…GIIL), 247 to 267 (PYPD…GFLW), 275 to 295 (VFMG…IGLA), 302 to 322 (LLIV…QVLY), and 356 to 376 (IVRT…LLQW).

This sequence belongs to the glycosyltransferase 4 family. MraY subfamily. Mg(2+) serves as cofactor.

It is found in the cell inner membrane. It catalyses the reaction UDP-N-acetyl-alpha-D-muramoyl-L-alanyl-gamma-D-glutamyl-meso-2,6-diaminopimeloyl-D-alanyl-D-alanine + di-trans,octa-cis-undecaprenyl phosphate = di-trans,octa-cis-undecaprenyl diphospho-N-acetyl-alpha-D-muramoyl-L-alanyl-D-glutamyl-meso-2,6-diaminopimeloyl-D-alanyl-D-alanine + UMP. It participates in cell wall biogenesis; peptidoglycan biosynthesis. Functionally, catalyzes the initial step of the lipid cycle reactions in the biosynthesis of the cell wall peptidoglycan: transfers peptidoglycan precursor phospho-MurNAc-pentapeptide from UDP-MurNAc-pentapeptide onto the lipid carrier undecaprenyl phosphate, yielding undecaprenyl-pyrophosphoryl-MurNAc-pentapeptide, known as lipid I. The protein is Phospho-N-acetylmuramoyl-pentapeptide-transferase of Thermosynechococcus vestitus (strain NIES-2133 / IAM M-273 / BP-1).